The primary structure comprises 196 residues: Large ribosomal subunit protein bL17 (196 aa).

Residues Ala133–Lys196 form a disordered region. The span at Ala134–Ala143 shows a compositional bias: basic and acidic residues. Acidic residues predominate over residues Glu152–Ala164. The segment covering Ala184–Lys196 has biased composition (basic and acidic residues).

This sequence belongs to the bacterial ribosomal protein bL17 family. Part of the 50S ribosomal subunit. Contacts protein L32.

The chain is Large ribosomal subunit protein bL17 from Arthrobacter sp. (strain FB24).